The following is a 334-amino-acid chain: Probable peptidoglycan endopeptidase LytE (334 aa).

A signal peptide spans M1 to A25. LysM domains follow at residues Q26–I69, S86–L129, and S149–V192. Disordered regions lie at residues N70–K89, G131–V153, and T195–S215. Composition is skewed to low complexity over residues K72–T87 and S132–V153. A NlpC/P60 domain is found at S217–F334. The active-site Nucleophile is C247. H296 acts as the Proton acceptor in catalysis. H308 is a catalytic residue.

This sequence belongs to the peptidase C40 family.

It localises to the secreted. Its subcellular location is the cell wall. Functionally, cell wall hydrolase that cleaves gamma-D-glutamate-meso-diaminopimelate bonds in peptidoglycan. Seems to play a role in cell separation during vegetative growth. This chain is Probable peptidoglycan endopeptidase LytE (lytE), found in Bacillus subtilis (strain 168).